A 307-amino-acid chain; its full sequence is Small ribosomal subunit biogenesis GTPase RsgA (307 aa).

A CP-type G domain is found at 80–237; it reads KADLRQTIVS…IVDTPGIKEF (158 aa). Residues 129 to 132 and 180 to 188 contribute to the GTP site; these read NKID and GQSGVGKSS. Zn(2+) is bound by residues Cys-261, Cys-266, His-268, and Cys-274.

Belongs to the TRAFAC class YlqF/YawG GTPase family. RsgA subfamily. As to quaternary structure, monomer. Associates with 30S ribosomal subunit, binds 16S rRNA. Requires Zn(2+) as cofactor.

The protein localises to the cytoplasm. Its function is as follows. One of several proteins that assist in the late maturation steps of the functional core of the 30S ribosomal subunit. Helps release RbfA from mature subunits. May play a role in the assembly of ribosomal proteins into the subunit. Circularly permuted GTPase that catalyzes slow GTP hydrolysis, GTPase activity is stimulated by the 30S ribosomal subunit. This Borreliella afzelii (strain PKo) (Borrelia afzelii) protein is Small ribosomal subunit biogenesis GTPase RsgA.